A 69-amino-acid chain; its full sequence is Conotoxin LvVID (69 aa).

The first 17 residues, 1 to 17 (VLIIAVLFLTACQLTTA), serve as a signal peptide directing secretion. A propeptide spanning residues 18–40 (ETYPRGQQRHHALRSTDKNSKLT) is cleaved from the precursor. 3 disulfide bridges follow: cysteine 43–cysteine 57, cysteine 50–cysteine 61, and cysteine 56–cysteine 68.

This sequence belongs to the conotoxin O1 superfamily. In terms of tissue distribution, expressed by the venom duct.

The protein resides in the secreted. This is Conotoxin LvVID from Conus lividus (Livid cone).